Here is a 443-residue protein sequence, read N- to C-terminus: Phosphoglucosamine mutase (443 aa).

The active-site Phosphoserine intermediate is the S101. The Mg(2+) site is built by S101, D239, D241, and D243. The residue at position 101 (S101) is a Phosphoserine.

The protein belongs to the phosphohexose mutase family. It depends on Mg(2+) as a cofactor. Post-translationally, activated by phosphorylation.

The enzyme catalyses alpha-D-glucosamine 1-phosphate = D-glucosamine 6-phosphate. Catalyzes the conversion of glucosamine-6-phosphate to glucosamine-1-phosphate. This is Phosphoglucosamine mutase from Francisella tularensis subsp. tularensis (strain WY96-3418).